The chain runs to 140 residues: Ribosome-binding factor A (140 aa).

A disordered region spans residues 121–140; the sequence is KTEQTSADDDADRLDSEDRS.

The protein belongs to the RbfA family. In terms of assembly, monomer. Binds 30S ribosomal subunits, but not 50S ribosomal subunits or 70S ribosomes.

The protein resides in the cytoplasm. In terms of biological role, one of several proteins that assist in the late maturation steps of the functional core of the 30S ribosomal subunit. Associates with free 30S ribosomal subunits (but not with 30S subunits that are part of 70S ribosomes or polysomes). Required for efficient processing of 16S rRNA. May interact with the 5'-terminal helix region of 16S rRNA. In Psychrobacter sp. (strain PRwf-1), this protein is Ribosome-binding factor A.